A 303-amino-acid chain; its full sequence is N-acetyl-D-glucosamine kinase (303 aa).

ATP contacts are provided by residues 4–11 (GFDIGGSK) and 133–140 (GVGGGLIV). Zn(2+) contacts are provided by histidine 157, cysteine 177, cysteine 179, and cysteine 184.

This sequence belongs to the ROK (NagC/XylR) family. NagK subfamily.

It catalyses the reaction N-acetyl-D-glucosamine + ATP = N-acetyl-D-glucosamine 6-phosphate + ADP + H(+). Its pathway is cell wall biogenesis; peptidoglycan recycling. Its function is as follows. Catalyzes the phosphorylation of N-acetyl-D-glucosamine (GlcNAc) derived from cell-wall degradation, yielding GlcNAc-6-P. The chain is N-acetyl-D-glucosamine kinase from Erwinia tasmaniensis (strain DSM 17950 / CFBP 7177 / CIP 109463 / NCPPB 4357 / Et1/99).